The primary structure comprises 302 residues: Glycine--tRNA ligase alpha subunit (302 aa).

The protein belongs to the class-II aminoacyl-tRNA synthetase family. In terms of assembly, tetramer of two alpha and two beta subunits.

It is found in the cytoplasm. It carries out the reaction tRNA(Gly) + glycine + ATP = glycyl-tRNA(Gly) + AMP + diphosphate. This is Glycine--tRNA ligase alpha subunit (glyQ) from Haemophilus influenzae (strain ATCC 51907 / DSM 11121 / KW20 / Rd).